Reading from the N-terminus, the 302-residue chain is N-acetylaspartate synthetase (302 aa).

A compositionally biased stretch (pro residues) spans P46–V60. The segment at P46 to P72 is disordered. The chain crosses the membrane as a helical span at residues Y121–V141. The N-acetyltransferase domain maps to A143 to A283.

The protein belongs to the NAT8 family. Expressed in brain.

It is found in the cytoplasm. The protein localises to the microsome membrane. It localises to the mitochondrion membrane. Its subcellular location is the endoplasmic reticulum membrane. It catalyses the reaction L-aspartate + acetyl-CoA = N-acetyl-L-aspartate + CoA + H(+). Aminooxyacetic acid (AOAA) blocks its activity in both cytoplasm and mitochondria. Catalyzes the synthesis of N-acetylaspartate acid (NAA) from L-aspartate and acetyl-CoA. Promotes dopamine uptake by regulating TNF-alpha expression. Attenuates methamphetamine-induced inhibition of dopamine uptake. The chain is N-acetylaspartate synthetase from Homo sapiens (Human).